Reading from the N-terminus, the 508-residue chain is Serine carboxypeptidase 3 (508 aa).

Positions 1–19 (MVTTPRLVSLLLLLALCAA) are cleaved as a signal peptide. A propeptide spanning residues 20 to 80 (AAGALRLPPD…PGQLLERRVT (61 aa)) is cleaved from the precursor. A disordered region spans residues 48–67 (PKDSSSSSGRHGARVGEGNE). The residue at position 81 (Leu81) is a Blocked amino end (Leu). Disulfide bonds link Cys133–Cys373, Cys301–Cys316, and Cys339–Cys344. N-linked (GlcNAc...) asparagine glycosylation is present at Asn151. The active site involves Ser223. Residue Asp411 is part of the active site. Residue Cys414 coordinates substrate. His468 is a catalytic residue. Residues 492 to 508 (EAVPEEESSTTSFYAAM) constitute a propeptide that is removed on maturation.

The protein belongs to the peptidase S10 family. In terms of assembly, monomer.

It is found in the secreted. It catalyses the reaction Release of a C-terminal amino acid with broad specificity.. Its activity is regulated as follows. Inhibited by mercuric ions. The protein is Serine carboxypeptidase 3 (CBP3) of Hordeum vulgare (Barley).